The sequence spans 546 residues: CTP synthase (546 aa).

Positions 1–266 (MTTNYIFVTG…DDLVCTRFGI (266 aa)) are amidoligase domain. Serine 14 provides a ligand contact to CTP. Serine 14 contributes to the UTP binding site. ATP contacts are provided by residues 15–20 (SLGKGI) and aspartate 72. 2 residues coordinate Mg(2+): aspartate 72 and glutamate 140. CTP is bound by residues 147–149 (DIE), 187–192 (KTKPTQ), and lysine 223. UTP contacts are provided by residues 187–192 (KTKPTQ) and lysine 223. 239 to 241 (KDV) is a binding site for ATP. In terms of domain architecture, Glutamine amidotransferase type-1 spans 291-542 (TIGMVGKYIE…VKAAGQYSRG (252 aa)). Glycine 352 lines the L-glutamine pocket. Residue cysteine 379 is the Nucleophile; for glutamine hydrolysis of the active site. L-glutamine is bound by residues 380-383 (LGMQ), glutamate 403, and arginine 470. Residues histidine 515 and glutamate 517 contribute to the active site.

This sequence belongs to the CTP synthase family. As to quaternary structure, homotetramer.

It carries out the reaction UTP + L-glutamine + ATP + H2O = CTP + L-glutamate + ADP + phosphate + 2 H(+). It catalyses the reaction L-glutamine + H2O = L-glutamate + NH4(+). The enzyme catalyses UTP + NH4(+) + ATP = CTP + ADP + phosphate + 2 H(+). The protein operates within pyrimidine metabolism; CTP biosynthesis via de novo pathway; CTP from UDP: step 2/2. Its activity is regulated as follows. Allosterically activated by GTP, when glutamine is the substrate; GTP has no effect on the reaction when ammonia is the substrate. The allosteric effector GTP functions by stabilizing the protein conformation that binds the tetrahedral intermediate(s) formed during glutamine hydrolysis. Inhibited by the product CTP, via allosteric rather than competitive inhibition. Catalyzes the ATP-dependent amination of UTP to CTP with either L-glutamine or ammonia as the source of nitrogen. Regulates intracellular CTP levels through interactions with the four ribonucleotide triphosphates. The sequence is that of CTP synthase from Vibrio parahaemolyticus serotype O3:K6 (strain RIMD 2210633).